A 561-amino-acid polypeptide reads, in one-letter code: Urocanate hydratase (561 aa).

Residues 52-53 (GG), Gln130, 176-178 (GMG), Glu196, Arg201, 242-243 (NA), 263-267 (QTSAH), 273-274 (YL), and Tyr322 contribute to the NAD(+) site. Residue Cys410 is part of the active site. Gly492 provides a ligand contact to NAD(+).

It belongs to the urocanase family. The cofactor is NAD(+).

It localises to the cytoplasm. It catalyses the reaction 4-imidazolone-5-propanoate = trans-urocanate + H2O. The protein operates within amino-acid degradation; L-histidine degradation into L-glutamate; N-formimidoyl-L-glutamate from L-histidine: step 2/3. Its function is as follows. Catalyzes the conversion of urocanate to 4-imidazolone-5-propionate. The protein is Urocanate hydratase of Salmonella agona (strain SL483).